The chain runs to 207 residues: Acyl-homoserine-lactone synthase (207 aa).

Belongs to the autoinducer synthase family.

It catalyses the reaction a fatty acyl-[ACP] + S-adenosyl-L-methionine = an N-acyl-L-homoserine lactone + S-methyl-5'-thioadenosine + holo-[ACP] + H(+). Its function is as follows. Required for the synthesis of N-butanoyl-L-homoserine lactone (BHL), an autoinducer molecule which binds to AsaR. In Aeromonas salmonicida, this protein is Acyl-homoserine-lactone synthase (asaI).